We begin with the raw amino-acid sequence, 293 residues long: Polyamine aminopropyltransferase (293 aa).

Residues 10 to 244 (HIWFTEYHNN…GFWSFTLASK (235 aa)) enclose the PABS domain. Glutamine 39 lines the S-methyl-5'-thioadenosine pocket. 2 residues coordinate spermidine: histidine 70 and aspartate 94. Residues glutamate 114 and 145-146 (DG) each bind S-methyl-5'-thioadenosine. Residue aspartate 163 is the Proton acceptor of the active site. 163–166 (DCPD) is a spermidine binding site. An S-methyl-5'-thioadenosine-binding site is contributed by proline 170.

This sequence belongs to the spermidine/spermine synthase family. Homodimer or homotetramer.

The protein localises to the cytoplasm. It carries out the reaction S-adenosyl 3-(methylsulfanyl)propylamine + putrescine = S-methyl-5'-thioadenosine + spermidine + H(+). The protein operates within amine and polyamine biosynthesis; spermidine biosynthesis; spermidine from putrescine: step 1/1. In terms of biological role, catalyzes the irreversible transfer of a propylamine group from the amino donor S-adenosylmethioninamine (decarboxy-AdoMet) to putrescine (1,4-diaminobutane) to yield spermidine. This Methanocaldococcus jannaschii (strain ATCC 43067 / DSM 2661 / JAL-1 / JCM 10045 / NBRC 100440) (Methanococcus jannaschii) protein is Polyamine aminopropyltransferase.